We begin with the raw amino-acid sequence, 80 residues long: Sec-independent protein translocase protein TatA (80 aa).

Residues 1–21 form a helical membrane-spanning segment; that stretch reads MGISMWQLLIVLLIIVLLFGT. Residues 39–80 form a disordered region; that stretch reads KKAMSDGESEEDKEPKKLSQNESRTIEGSVERNDAKTESKHS. Positions 67–80 are enriched in basic and acidic residues; the sequence is SVERNDAKTESKHS.

This sequence belongs to the TatA/E family. In terms of assembly, the Tat system comprises two distinct complexes: a TatABC complex, containing multiple copies of TatA, TatB and TatC subunits, and a separate TatA complex, containing only TatA subunits. Substrates initially bind to the TatABC complex, which probably triggers association of the separate TatA complex to form the active translocon.

The protein localises to the cell inner membrane. Part of the twin-arginine translocation (Tat) system that transports large folded proteins containing a characteristic twin-arginine motif in their signal peptide across membranes. TatA could form the protein-conducting channel of the Tat system. The polypeptide is Sec-independent protein translocase protein TatA (Hahella chejuensis (strain KCTC 2396)).